A 255-amino-acid polypeptide reads, in one-letter code: Myb-related protein Zm38 (255 aa).

2 HTH myb-type domains span residues 9–61 and 62–116; these read KAHT…INYL and RPDL…RRKL. DNA-binding regions (H-T-H motif) lie at residues 37 to 61 and 89 to 112; these read WRSL…INYL and WSLI…NTHV.

It localises to the nucleus. Its function is as follows. Transcription factor that negatively regulates genes involved in anthocyanin biosynthesis. The polypeptide is Myb-related protein Zm38 (Zea mays (Maize)).